The chain runs to 507 residues: ATP synthase subunit alpha, chloroplastic (507 aa).

An ATP-binding site is contributed by 170-177 (GDRQTGKT). Threonine 257 carries the post-translational modification Phosphothreonine.

The protein belongs to the ATPase alpha/beta chains family. F-type ATPases have 2 components, CF(1) - the catalytic core - and CF(0) - the membrane proton channel. CF(1) has five subunits: alpha(3), beta(3), gamma(1), delta(1), epsilon(1). CF(0) has four main subunits: a, b, b' and c.

Its subcellular location is the plastid. The protein resides in the chloroplast thylakoid membrane. The catalysed reaction is ATP + H2O + 4 H(+)(in) = ADP + phosphate + 5 H(+)(out). Produces ATP from ADP in the presence of a proton gradient across the membrane. The alpha chain is a regulatory subunit. This Lepidium virginicum (Virginia pepperweed) protein is ATP synthase subunit alpha, chloroplastic.